The chain runs to 1016 residues: UvrABC system protein A (1016 aa).

Residue 32–39 (GVSGSGKS) participates in ATP binding. The segment at 259–286 (CPEHGSVLEELEPRSFSFNSPYGACGDC) adopts a C4-type zinc-finger fold. ABC transporter domains follow at residues 315-627 (WTKK…KNSL) and 647-975 (GNGK…EYLR). 679 to 686 (GPSGSGKS) contacts ATP. The C4-type zinc-finger motif lies at 778–804 (CEHCKGDGVMKIEMNFLPDIYVPCEVC). Positions 984–1016 (EPRARGEKAEKPAKAKAPAKKRTKKQTELVEAD) are disordered. Residues 985 to 996 (PRARGEKAEKPA) are compositionally biased toward basic and acidic residues.

It belongs to the ABC transporter superfamily. UvrA family. As to quaternary structure, forms a heterotetramer with UvrB during the search for lesions.

The protein resides in the cytoplasm. The UvrABC repair system catalyzes the recognition and processing of DNA lesions. UvrA is an ATPase and a DNA-binding protein. A damage recognition complex composed of 2 UvrA and 2 UvrB subunits scans DNA for abnormalities. When the presence of a lesion has been verified by UvrB, the UvrA molecules dissociate. The polypeptide is UvrABC system protein A (Deinococcus radiodurans (strain ATCC 13939 / DSM 20539 / JCM 16871 / CCUG 27074 / LMG 4051 / NBRC 15346 / NCIMB 9279 / VKM B-1422 / R1)).